The primary structure comprises 642 residues: MPVIRFYDGSQQVYEHSVSLIEIIKNKKPSIMKSLIAISVNNHFSNLNTFIREDAFIEFVDQKNYKALNIIRYSCAQLLSYAIKNIWPLAQIATSNIIEDGFYCDIDFKRSISEKDLILLENQMKTLVKREYNILNKLISYSEAREIFQKCFEKYKVSLIDENINCNSKVSLYYHENYADIDIGLQVFNIKFCKYFKLQKIGGVYWKKNKNNKMLQRIYGTAWTNKQELDKHLDYLNELEKRDHRKIGKFLQLYHMQEESPGMIFWHNKGWIIFNELQNFVRVKLKEYKYEEVKTPLLIDKLIWKQSGHWDNYKNAIFTTLSEHREYCIKPMNCPGHVQIFNSRLKSYRDLPIRMAEFGSCHRNEPSGSLHGLMRVRNFTQDDAHIFCTREQVRSEINDCIKMIYDLYSTFHFKKILVKLSTRPEKRIGTDSLWNESEKDLSDMLIENHLSFEYQSGEGAFYGPKIEFILQDSLDRNWQCGTIQLDFYLPLRLSSFYINEKNEKKVPVIIHRAILGSIERFIGILIEECSGNLPTWLSPVQVVIISITDISSGYVKELFKKFSDVNIRIECDLRNEKIGFKIREHTLRRIPYILICGEKESSSKKISVRNRQGHNFGMIDVDFFIKKLQKEIITRNFYQMEE.

Positions 1 to 61 constitute a TGS domain; sequence MPVIRFYDGS…REDAFIEFVD (61 aa). A catalytic region spans residues 243-534; the sequence is DHRKIGKFLQ…LIEECSGNLP (292 aa). The Zn(2+) site is built by Cys-334, His-385, and His-511.

This sequence belongs to the class-II aminoacyl-tRNA synthetase family. As to quaternary structure, homodimer. It depends on Zn(2+) as a cofactor.

It localises to the cytoplasm. It catalyses the reaction tRNA(Thr) + L-threonine + ATP = L-threonyl-tRNA(Thr) + AMP + diphosphate + H(+). Functionally, catalyzes the attachment of threonine to tRNA(Thr) in a two-step reaction: L-threonine is first activated by ATP to form Thr-AMP and then transferred to the acceptor end of tRNA(Thr). Also edits incorrectly charged L-seryl-tRNA(Thr). The chain is Threonine--tRNA ligase from Buchnera aphidicola subsp. Acyrthosiphon pisum (strain 5A).